The primary structure comprises 69 residues: UPF0337 protein RB0906 (69 aa).

The protein belongs to the UPF0337 (CsbD) family.

This is UPF0337 protein RB0906 from Rhizobium meliloti (strain 1021) (Ensifer meliloti).